Consider the following 276-residue polypeptide: Large ribosomal subunit protein uL2 (276 aa).

Positions Ala224–Lys276 are disordered. The span at Lys254–Lys276 shows a compositional bias: basic residues.

The protein belongs to the universal ribosomal protein uL2 family. In terms of assembly, part of the 50S ribosomal subunit. Forms a bridge to the 30S subunit in the 70S ribosome.

One of the primary rRNA binding proteins. Required for association of the 30S and 50S subunits to form the 70S ribosome, for tRNA binding and peptide bond formation. It has been suggested to have peptidyltransferase activity; this is somewhat controversial. Makes several contacts with the 16S rRNA in the 70S ribosome. This Solidesulfovibrio magneticus (strain ATCC 700980 / DSM 13731 / RS-1) (Desulfovibrio magneticus) protein is Large ribosomal subunit protein uL2.